Reading from the N-terminus, the 311-residue chain is Putative F-box protein At3g28280 (311 aa).

Residues 1-43 enclose the F-box domain; that stretch reads MNSLPEDLLAMILVKLPIKIFTTFKIVCTQWESMVDSPYFRDL.

The sequence is that of Putative F-box protein At3g28280 from Arabidopsis thaliana (Mouse-ear cress).